Consider the following 308-residue polypeptide: Tetraspanin-12 (308 aa).

Topologically, residues M1–S41 are cytoplasmic. Residues V42–W62 traverse the membrane as a helical segment. Residues A63–W86 are Extracellular-facing. Residues P87–L107 traverse the membrane as a helical segment. Over R108–S112 the chain is Cytoplasmic. A helical membrane pass occupies residues F113 to V133. At F134 to N268 the chain is on the extracellular side. A glycan (N-linked (GlcNAc...) asparagine) is linked at N213. A helical membrane pass occupies residues M269 to F289. Topologically, residues A290 to H308 are cytoplasmic.

The protein belongs to the tetraspanin (TM4SF) family. In terms of assembly, may interact with protease sup-17; the interaction promotes sup-17 cell membrane localization. As to expression, expressed in the germline.

Its subcellular location is the cell membrane. It localises to the cytoplasmic vesicle membrane. The protein resides in the endosome membrane. The protein localises to the early endosome membrane. It is found in the late endosome membrane. Its subcellular location is the recycling endosome membrane. It localises to the golgi apparatus. The protein resides in the trans-Golgi network membrane. Its function is as follows. Functions redundantly with tsp-14 isoform a to regulate body size, embryonic and vulva development. Functions redundantly with tsp-14 (isoforms a and b) to regulate cell fate specification in the postembryonic mesodermal M lineage and male development. May regulate BMP-like Sma/Mab signaling by mediating protease sup-17 trafficking to the cell surface. Together with tsp-14, functions redundantly to maintain cell surface levels of the BMP type II receptor daf-4 (but not BMP type I receptor sma-6), probably by regulating endosomal sorting of receptors and their targeting to degradative lysosomes. Together with tsp-14 involved in maintaining the structural and functional integrity of the endosomal network. Together with tsp-14, probably acts by modulating the activation of glp-1, a Notch-like receptor, to regulate germline maturation. Probably acts by modulating the activation of lin-12, a Notch-like receptor, to regulate cell fate specification such as the anchor cell/ventral uterine precursor cell decision. In Caenorhabditis elegans, this protein is Tetraspanin-12.